The sequence spans 340 residues: Tetraacyldisaccharide 4'-kinase (340 aa).

Residue 51–58 (HMGGAGKT) participates in ATP binding.

The protein belongs to the LpxK family.

It carries out the reaction a lipid A disaccharide + ATP = a lipid IVA + ADP + H(+). It participates in glycolipid biosynthesis; lipid IV(A) biosynthesis; lipid IV(A) from (3R)-3-hydroxytetradecanoyl-[acyl-carrier-protein] and UDP-N-acetyl-alpha-D-glucosamine: step 6/6. In terms of biological role, transfers the gamma-phosphate of ATP to the 4'-position of a tetraacyldisaccharide 1-phosphate intermediate (termed DS-1-P) to form tetraacyldisaccharide 1,4'-bis-phosphate (lipid IVA). The protein is Tetraacyldisaccharide 4'-kinase of Rhodopseudomonas palustris (strain ATCC BAA-98 / CGA009).